Consider the following 57-residue polypeptide: Potassium channel toxin alpha-KTx 26.1 (57 aa).

The signal sequence occupies residues 1–22 (MSRLFVFILIALFLSAIIDVMS). Intrachain disulfides connect Cys-30-Cys-48, Cys-34-Cys-53, and Cys-38-Cys-55.

Belongs to the short scorpion toxin superfamily. Potassium channel inhibitor family. Alpha-KTx 26 subfamily. Expressed by the venom gland.

The protein localises to the secreted. In terms of biological role, recombinant toxin that reversibly inhibits the potassium current of mKv1.3/KCNA3 channel stably expressed in COS7 cells (IC(50)=150 nM). Also shows a weak inhibition on Kv1.2/KCNA2, Kv1.3/KCNA3 and TRPV1 channels. The sequence is that of Potassium channel toxin alpha-KTx 26.1 from Olivierus martensii (Manchurian scorpion).